We begin with the raw amino-acid sequence, 884 residues long: Schlafen family member 5 (884 aa).

Position 574–581 (Gly-574–Thr-581) interacts with ATP.

This sequence belongs to the Schlafen family. Subgroup III subfamily.

Functionally, may have a role in hematopoietic cell differentiation. In Mus musculus (Mouse), this protein is Schlafen family member 5 (Slfn5).